A 391-amino-acid polypeptide reads, in one-letter code: Deoxyguanosinetriphosphate triphosphohydrolase-like protein (391 aa).

Positions 62 to 198 constitute an HD domain; that stretch reads RLTHSLEVST…ASLADDISYI (137 aa).

Belongs to the dGTPase family. Type 2 subfamily.

In Rickettsia akari (strain Hartford), this protein is Deoxyguanosinetriphosphate triphosphohydrolase-like protein.